The following is a 340-amino-acid chain: Organic solute transporter subunit alpha (340 aa).

Over 1–52 (MEPDRTQIRLDPRYTADLLEILKTNYSVPSACFSYPPTAAQLLRALGPVDIS) the chain is Extracellular. Asn-25 carries an N-linked (GlcNAc...) asparagine glycan. Residues 53–73 (LMVIMTLFVLGSIAIFLEAAV) form a helical membrane-spanning segment. At 74 to 87 (YLHKNTRCPIKRKT) the chain is on the cytoplasmic side. A helical transmembrane segment spans residues 88 to 108 (LIWCSSSPTIVSAFSCFGLWI). Topologically, residues 109-110 (PR) are extracellular. Residues 111–131 (ALTLVEMAITTFYSMCFYLLM) form a helical membrane-spanning segment. Topologically, residues 132–186 (QAMVEGFGGKEAVLRTLKDTPVMIHTGPCCCCCPCCPRIKITRKRLQLLLLGPIQ) are cytoplasmic. A helical transmembrane segment spans residues 187–207 (YAFFKISLTLVGLFLIPDGIF). The Extracellular portion of the chain corresponds to 208 to 219 (DPSDISEGSTAL). Residues 220–240 (WINTFLGVSTLSALWTIGIIF) form a helical membrane-spanning segment. Residues 241 to 255 (RQARLHLGEQNIGAK) lie on the Cytoplasmic side of the membrane. A helical transmembrane segment spans residues 256–276 (FVLFQALLILSALQPSIFSVL). The Extracellular segment spans residues 277–295 (ASGGQIACSPPFSSKIRSQ). Residues 296-316 (VMNCHLLILESFLITVLTRIY) form a helical membrane-spanning segment. At 317-340 (YRRKDDKLGYEPFSSPDQDLNLKA) the chain is on the cytoplasmic side. Ser-330 is modified (phosphoserine).

Belongs to the OST-alpha family. In terms of assembly, interacts with SLC51B. The Ost-alpha/Ost-beta complex is a heterodimer composed of alpha (SLC51A) and beta (SLC51B) subunit.

It localises to the cell membrane. The protein resides in the endoplasmic reticulum membrane. The catalysed reaction is taurocholate(out) = taurocholate(in). It catalyses the reaction estrone 3-sulfate(out) = estrone 3-sulfate(in). It carries out the reaction dehydroepiandrosterone 3-sulfate(out) = dehydroepiandrosterone 3-sulfate(in). The enzyme catalyses tauroursodeoxycholate(out) = tauroursodeoxycholate(in). The catalysed reaction is glycoursodeoxycholate(out) = glycoursodeoxycholate(in). It catalyses the reaction glycocholate(out) = glycocholate(in). It carries out the reaction taurochenodeoxycholate(out) = taurochenodeoxycholate(in). The enzyme catalyses glycochenodeoxycholate(out) = glycochenodeoxycholate(in). The catalysed reaction is taurodeoxycholate(out) = taurodeoxycholate(in). It catalyses the reaction glycodeoxycholate(out) = glycodeoxycholate(in). It carries out the reaction prostaglandin E2(out) = prostaglandin E2(in). Essential component of the Ost-alpha/Ost-beta complex, a heterodimer that acts as the intestinal basolateral transporter responsible for bile acid export from enterocytes into portal blood. Efficiently transports the major species of bile acids (taurocholate). Taurine conjugates are transported more efficiently across the basolateral membrane than glycine-conjugated bile acids. Can also transport steroids such as estrone 3-sulfate and dehydroepiandrosterone 3-sulfate, therefore playing a role in the enterohepatic circulation of sterols. Able to transport eicosanoids such as prostaglandin E2. The chain is Organic solute transporter subunit alpha (SLC51A) from Bos taurus (Bovine).